The sequence spans 126 residues: MRQKAGSYLAVFAGGAIGSVLRELLGFQLPGLSFLTATFGINIAACFLLGWLYAIRHRLHPHLLHLGAVGFCGGLSTFSSFVLELDQLTRMDGWSIGLTAMTLEIAAGLAAAILGEALGRGREARR.

A run of 4 helical transmembrane segments spans residues 9 to 29, 35 to 55, 63 to 83, and 94 to 114; these read LAVF…GFQL, LTAT…LYAI, LLHL…SFVL, and WSIG…AAIL. Glycine 73 and serine 76 together coordinate Na(+).

It belongs to the fluoride channel Fluc/FEX (TC 1.A.43) family.

It localises to the cell inner membrane. The catalysed reaction is fluoride(in) = fluoride(out). Its activity is regulated as follows. Na(+) is not transported, but it plays an essential structural role and its presence is essential for fluoride channel function. Fluoride-specific ion channel. Important for reducing fluoride concentration in the cell, thus reducing its toxicity. This is Fluoride-specific ion channel FluC from Ruegeria pomeroyi (strain ATCC 700808 / DSM 15171 / DSS-3) (Silicibacter pomeroyi).